Consider the following 245-residue polypeptide: Derlin-1 (245 aa).

At 1-17 the chain is on the cytoplasmic side; the sequence is MDAGVWYRSLPRFTRYW. The chain crosses the membrane as a helical span at residues 18-38; sequence LTATVVLSMLCRFDVIPLHWL. Residues 39–58 are Lumenal-facing; that stretch reads HLDRSAVFSKLQLWRCMTSL. Residues 59–79 form a helical membrane-spanning segment; that stretch reads FVFPISSNTAFHFLINCFFIV. The Cytoplasmic portion of the chain corresponds to 80-99; the sequence is QYSSKLEKDQYSRSPADYLY. Residues 100-120 form a helical membrane-spanning segment; that stretch reads LLIVSAVLANIGGMIFNVYFL. Topologically, residues 121 to 156 are lumenal; sequence MDTLVLAITYIWCQLNKDVTVSFWFGTRFKAMYLPW. Residues 157-177 form a helical membrane-spanning segment; the sequence is VLAAFEFIFHFSLASLVGIFV. Residues 178–245 are Cytoplasmic-facing; it reads GHVYYFFKFQ…WGRGMTLGRN (68 aa). Residues 218 to 245 form a disordered region; that stretch reads FGLPPESRAPPRQATESPWGRGMTLGRN.

Belongs to the derlin family.

The protein resides in the endoplasmic reticulum membrane. In terms of biological role, may be involved in the degradation process of specific misfolded endoplasmic reticulum (ER) luminal proteins. May also involved in endoplasmic reticulum stress-induced pre-emptive quality control, a mechanism that selectively attenuates the translocation of newly synthesized proteins into the endoplasmic reticulum and reroutes them to the cytosol for proteasomal degradation. This chain is Derlin-1, found in Drosophila melanogaster (Fruit fly).